A 106-amino-acid polypeptide reads, in one-letter code: Small membrane A-kinase anchor protein (106 aa).

A lipid anchor (N-myristoyl glycine) is attached at Gly-2. Residue Cys-3 is the site of S-palmitoyl cysteine attachment. Position 40 is a phosphoserine (Ser-40). Residues 62 to 85 form a PKA-RI-binding region; sequence ALILEFADRLASEIVEDALQQWAC. Phosphoserine is present on Ser-98.

It belongs to the small membrane AKAP family. Interacts with PKA type I regulatory subunits PRKAR1A and PRKAR1B. Also binds to type II regulatory subunits, but at a tenfold lower affinity. In terms of processing, may be palmitoylated at Cys-3. Widely expressed, with very low levels in spleen and liver.

The protein resides in the cell membrane. In terms of biological role, binds to type I regulatory subunits of protein kinase A (PKA-RI) and may anchor/target them to the plasma membrane. The sequence is that of Small membrane A-kinase anchor protein from Mus musculus (Mouse).